We begin with the raw amino-acid sequence, 273 residues long: Putative pyruvate, phosphate dikinase regulatory protein (273 aa).

153 to 160 (GVSRTSKS) is an ADP binding site.

The protein belongs to the pyruvate, phosphate/water dikinase regulatory protein family. PDRP subfamily.

It catalyses the reaction N(tele)-phospho-L-histidyl/L-threonyl-[pyruvate, phosphate dikinase] + ADP = N(tele)-phospho-L-histidyl/O-phospho-L-threonyl-[pyruvate, phosphate dikinase] + AMP + H(+). The catalysed reaction is N(tele)-phospho-L-histidyl/O-phospho-L-threonyl-[pyruvate, phosphate dikinase] + phosphate + H(+) = N(tele)-phospho-L-histidyl/L-threonyl-[pyruvate, phosphate dikinase] + diphosphate. Functionally, bifunctional serine/threonine kinase and phosphorylase involved in the regulation of the pyruvate, phosphate dikinase (PPDK) by catalyzing its phosphorylation/dephosphorylation. This chain is Putative pyruvate, phosphate dikinase regulatory protein, found in Ehrlichia chaffeensis (strain ATCC CRL-10679 / Arkansas).